Here is a 751-residue protein sequence, read N- to C-terminus: Cytosolic neutral trehalase (751 aa).

Residues 1 to 10 (MSQVNTSQGP) are compositionally biased toward polar residues. The disordered stretch occupies residues 1–59 (MSQVNTSQGPVAQGRQRRLSSLSEFNDPFSNAEVYYGPPTDPRKQKQAKPAKINRTRTM). Serine 2 bears the N-acetylserine mark. A phosphoserine; by PKA mark is found at serine 20 and serine 21. Serine 23 is modified (phosphoserine). Over residues 45-55 (QKQAKPAKINR) the composition is skewed to basic residues. Residue threonine 58 is modified to Phosphothreonine. Phosphoserine; by PKA is present on serine 60. Serine 66 is modified (phosphoserine). The disordered stretch occupies residues 73-92 (FGKLQQTRRGSEDDTYSSSQ). Serine 83 bears the Phosphoserine; by PKA mark. 5 residues coordinate Ca(2+): aspartate 114, aspartate 116, asparagine 118, glutamine 120, and aspartate 125. Residues arginine 302, 309–310 (WD), asparagine 346, 355–357 (RSQ), glutamate 424, arginine 473, and glycine 476 each bind substrate. Active-site proton donor/acceptor residues include aspartate 478 and glutamate 674.

The protein belongs to the glycosyl hydrolase 37 family. Monomer. Interacts with BMH1 dimers; the interaction is direct and activates NTH1. Interacts with BMH2. Ca(2+) serves as cofactor. In terms of processing, phosphorylated by protein kinase A (PKA); phosphorylation at Ser-60 and Ser-83 is required for activation by the 14-3-3 proteins BMH1 and BMH2.

Its subcellular location is the cytoplasm. The enzyme catalyses alpha,alpha-trehalose + H2O = alpha-D-glucose + beta-D-glucose. It participates in carbohydrate degradation. Its activity is regulated as follows. Activated by calcium. Activated by protein kinase A (PKA)-mediated phosphorylation. Hydrolyzes intracellular trehalose to glucose. The disaccharide trehalose serves as a storage carbohydrate that is mobilized during nutrient stress. Regulates the level of trehalose as a protectant for cell integrity during heat stress. The protein is Cytosolic neutral trehalase of Saccharomyces cerevisiae (strain ATCC 204508 / S288c) (Baker's yeast).